Here is a 176-residue protein sequence, read N- to C-terminus: Ribosome maturation factor RimM (176 aa).

Residues 100–173 (KDEYHYHDLI…WLLINPPPGL (74 aa)) enclose the PRC barrel domain.

This sequence belongs to the RimM family. Binds ribosomal protein uS19.

It is found in the cytoplasm. An accessory protein needed during the final step in the assembly of 30S ribosomal subunit, possibly for assembly of the head region. Essential for efficient processing of 16S rRNA. May be needed both before and after RbfA during the maturation of 16S rRNA. It has affinity for free ribosomal 30S subunits but not for 70S ribosomes. The chain is Ribosome maturation factor RimM from Prochlorococcus marinus (strain NATL2A).